The chain runs to 81 residues: Neuronatin (81 aa).

Belongs to the neuronatin family.

Functionally, may participate in the maintenance of segment identity in the hindbrain and pituitary development, and maturation or maintenance of the overall structure of the nervous system. May function as a regulatory subunit of ion channels. The protein is Neuronatin (NNAT) of Homo sapiens (Human).